The sequence spans 125 residues: MPTISQLVRKPRKAKRTKSKVPALESCPQKRGVCTRVYTTTPKKPNSALRKVARVRLTNGYEVSSYIGGEGHNLQEHSVVLIRGGRVKDLPGVRYHTVRGSLDTAGVKDRKQARSKYGSKRPKSA.

Residues 1 to 24 form a disordered region; sequence MPTISQLVRKPRKAKRTKSKVPAL. A compositionally biased stretch (basic residues) spans 9–19; that stretch reads RKPRKAKRTKS. Aspartate 89 is modified (3-methylthioaspartic acid). The interval 101-125 is disordered; the sequence is SLDTAGVKDRKQARSKYGSKRPKSA. Basic residues predominate over residues 113–125; that stretch reads ARSKYGSKRPKSA.

Belongs to the universal ribosomal protein uS12 family. As to quaternary structure, part of the 30S ribosomal subunit. Contacts proteins S8 and S17. May interact with IF1 in the 30S initiation complex.

With S4 and S5 plays an important role in translational accuracy. In terms of biological role, interacts with and stabilizes bases of the 16S rRNA that are involved in tRNA selection in the A site and with the mRNA backbone. Located at the interface of the 30S and 50S subunits, it traverses the body of the 30S subunit contacting proteins on the other side and probably holding the rRNA structure together. The combined cluster of proteins S8, S12 and S17 appears to hold together the shoulder and platform of the 30S subunit. In Nitrosomonas europaea (strain ATCC 19718 / CIP 103999 / KCTC 2705 / NBRC 14298), this protein is Small ribosomal subunit protein uS12.